Reading from the N-terminus, the 228-residue chain is Glutamate transport system permease protein GluC (228 aa).

The next 5 helical transmembrane spans lie at 16-36, 64-84, 100-120, 145-165, and 195-215; these read FWVT…FGTI, LTLV…LTLA, AVLG…RSGI, IIFP…LIAL, and LFVV…PMGL. The ABC transmembrane type-1 domain occupies 16–217; that stretch reads FWVTIKLTIY…ILTLPMGLGL (202 aa).

Belongs to the binding-protein-dependent transport system permease family. HisMQ subfamily. The complex is composed of two ATP-binding proteins (GluA), two transmembrane proteins (GluC and GluD) and a solute-binding protein (GluB).

The protein resides in the cell membrane. Functionally, part of the ABC transporter complex GluABCD involved in glutamate uptake. Probably responsible for the translocation of the substrate across the membrane. This is Glutamate transport system permease protein GluC from Corynebacterium glutamicum (strain ATCC 13032 / DSM 20300 / JCM 1318 / BCRC 11384 / CCUG 27702 / LMG 3730 / NBRC 12168 / NCIMB 10025 / NRRL B-2784 / 534).